The following is a 220-amino-acid chain: uncharacterized protein (220 aa).

Residues 10–30 (FFIIGGVILSIGLILFFLLGF) traverse the membrane as a helical segment.

The protein localises to the membrane. This is an uncharacterized protein from Methanocaldococcus jannaschii (strain ATCC 43067 / DSM 2661 / JAL-1 / JCM 10045 / NBRC 100440) (Methanococcus jannaschii).